The chain runs to 141 residues: Large ribosomal subunit protein uL11c (141 aa).

It belongs to the universal ribosomal protein uL11 family. In terms of assembly, part of the ribosomal stalk of the 50S ribosomal subunit. Interacts with L10 and the large rRNA to form the base of the stalk. L10 forms an elongated spine to which L12 dimers bind in a sequential fashion forming a multimeric L10(L12)X complex.

It is found in the plastid. Its subcellular location is the chloroplast. In terms of biological role, forms part of the ribosomal stalk which helps the ribosome interact with GTP-bound translation factors. The polypeptide is Large ribosomal subunit protein uL11c (Trieres chinensis (Marine centric diatom)).